An 87-amino-acid polypeptide reads, in one-letter code: Putative membrane protein insertion efficiency factor (87 aa).

This sequence belongs to the UPF0161 family.

It is found in the cell membrane. Functionally, could be involved in insertion of integral membrane proteins into the membrane. This Streptococcus pyogenes serotype M12 (strain MGAS2096) protein is Putative membrane protein insertion efficiency factor.